The sequence spans 189 residues: Small ribosomal subunit protein uS5 (189 aa).

Positions 20–83 (FVDRLVHINR…ESAKRALIRV (64 aa)) constitute an S5 DRBM domain.

The protein belongs to the universal ribosomal protein uS5 family. In terms of assembly, part of the 30S ribosomal subunit. Contacts proteins S4 and S8.

In terms of biological role, with S4 and S12 plays an important role in translational accuracy. Located at the back of the 30S subunit body where it stabilizes the conformation of the head with respect to the body. The sequence is that of Small ribosomal subunit protein uS5 from Beijerinckia indica subsp. indica (strain ATCC 9039 / DSM 1715 / NCIMB 8712).